Reading from the N-terminus, the 283-residue chain is Elongation factor Ts (283 aa).

Positions 80 to 83 (TDFV) are involved in Mg(2+) ion dislocation from EF-Tu.

The protein belongs to the EF-Ts family.

The protein resides in the cytoplasm. In terms of biological role, associates with the EF-Tu.GDP complex and induces the exchange of GDP to GTP. It remains bound to the aminoacyl-tRNA.EF-Tu.GTP complex up to the GTP hydrolysis stage on the ribosome. The polypeptide is Elongation factor Ts (Cronobacter sakazakii (strain ATCC BAA-894) (Enterobacter sakazakii)).